Here is a 147-residue protein sequence, read N- to C-terminus: Large ribosomal subunit protein bL9 (147 aa).

This sequence belongs to the bacterial ribosomal protein bL9 family.

In terms of biological role, binds to the 23S rRNA. This is Large ribosomal subunit protein bL9 from Bacteroides thetaiotaomicron (strain ATCC 29148 / DSM 2079 / JCM 5827 / CCUG 10774 / NCTC 10582 / VPI-5482 / E50).